The chain runs to 160 residues: Cyclic pyranopterin monophosphate synthase (160 aa).

Substrate-binding positions include 76–78 (MCH) and 113–114 (ME). D128 is a catalytic residue.

This sequence belongs to the MoaC family. In terms of assembly, homohexamer; trimer of dimers.

It catalyses the reaction (8S)-3',8-cyclo-7,8-dihydroguanosine 5'-triphosphate = cyclic pyranopterin phosphate + diphosphate. The protein operates within cofactor biosynthesis; molybdopterin biosynthesis. Functionally, catalyzes the conversion of (8S)-3',8-cyclo-7,8-dihydroguanosine 5'-triphosphate to cyclic pyranopterin monophosphate (cPMP). This chain is Cyclic pyranopterin monophosphate synthase, found in Brevibacillus brevis (strain 47 / JCM 6285 / NBRC 100599).